Reading from the N-terminus, the 437-residue chain is Glutamyl-tRNA reductase (437 aa).

Residues 49-52, S109, 114-116, and Q120 contribute to the substrate site; these read TCNR and EVQ. The Nucleophile role is filled by C50. An NADP(+)-binding site is contributed by 189–194; the sequence is GAGDTA.

Belongs to the glutamyl-tRNA reductase family. In terms of assembly, homodimer.

The enzyme catalyses (S)-4-amino-5-oxopentanoate + tRNA(Glu) + NADP(+) = L-glutamyl-tRNA(Glu) + NADPH + H(+). It participates in porphyrin-containing compound metabolism; protoporphyrin-IX biosynthesis; 5-aminolevulinate from L-glutamyl-tRNA(Glu): step 1/2. The protein operates within porphyrin-containing compound metabolism; chlorophyll biosynthesis. Catalyzes the NADPH-dependent reduction of glutamyl-tRNA(Glu) to glutamate 1-semialdehyde (GSA). This chain is Glutamyl-tRNA reductase, found in Chloroherpeton thalassium (strain ATCC 35110 / GB-78).